A 619-amino-acid polypeptide reads, in one-letter code: MVNEYKRIVLLRGLECINKHYFSLFKSLLARDLNLERDNQEQYTTIQIANMMEEKFPADSGLGKLIAFCEEVPALRKRAEILKKERSEVTGETSLEKNGQEAGPATPTSTTSHMLASERGETSATQEETSTAQAGTSTAQARTSTAQAGTSTAQKRKIMREEETGVKKSKAAKEPDQPPCCEEPTARCQSPILHSSSSASSNIPSAKNQKSQPQNQNIPRGAVLHSEPLTVMVLTATDPFEYESPEHEVKNMLHATVATVSQYFHVKVFNINLKEKFTKKNFIIISNYFESKGILEINETSSVLEAAPDQMIEVPNSIIRNANASPKICDIQKGTSGAVFYGVFTLHKKTVNRKNTIYEIKDGSGSIEVVGSGKWHNINCKEGDKLHLFCFHLKTIDRQPKLVCGEHSFIKISKRGNVPKEPAKEEDHHHGPKQVMVLKVTEPFTYDLKEDKRMFHATVATETEFFRVKVFDTALKSKFIPRNIIAISDYFGCNGFLEIYRASCVSDVNVNPTMVISNTLRQRANATPKISYLFSQARGTFVSGEYLVNKKTERNKFIYYGIGDDTGKMEVVVYGRLTNVRCEPGSKLRLVCFELTSTEDGWQLRSVRHSYMQVINARK.

The Pyrin domain occupies 1–88 (MVNEYKRIVL…AEILKKERSE (88 aa)). Residues 24–35 (LFKSLLARDLNL) carry the Nuclear export signal motif. Over residues 86-99 (RSEVTGETSLEKNG) the composition is skewed to basic and acidic residues. Positions 86–223 (RSEVTGETSL…QNQNIPRGAV (138 aa)) are disordered. Residues 122–153 (TSATQEETSTAQAGTSTAQARTSTAQAGTSTA) show a composition bias toward low complexity. 3 consecutive repeat copies span residues 134 to 140 (AGTSTAQ), 141 to 147 (ARTSTAQ), and 148 to 154 (AGTSTAQ). A 3 X 7 AA tandem repeats of A-[GR]-T-S-T-A-Q region spans residues 134–154 (AGTSTAQARTSTAQAGTSTAQ). The Nuclear localization signal motif lies at 150-157 (TSTAQKRK). The segment covering 159–176 (MREEETGVKKSKAAKEPD) has biased composition (basic and acidic residues). The span at 190–206 (SPILHSSSSASSNIPSA) shows a compositional bias: low complexity. Positions 207–218 (KNQKSQPQNQNI) are enriched in polar residues. 2 HIN-200 domains span residues 213–413 (PQNQ…IKIS) and 417–615 (NVPK…MQVI). The tract at residues 550-614 (KKTERNKFIY…RSVRHSYMQV (65 aa)) is interaction with ID2.

The protein belongs to the HIN-200 family. Interacts with UBTF. Interacts with RUNX2. Interacts with ID1, ID2 and ID3. Interacts with STING. In terms of processing, acetylated upon bacterial infection, leading to translocation from nucleus to cytoplasm and subsequent recruitment of STING to activate IFN-beta production. As to expression, present in osteoblasts (at protein level).

The protein localises to the nucleus. Its subcellular location is the nucleolus. It is found in the cytoplasm. Functionally, interferon-stimulated protein that plays a role in several biological processes including cell differentiation, autophagy and innate immunity. Cooperates with CGAS to sense dsDNA and activates the STING-dependent type I IFN pathway. Mechanistically, gets acetylated upon bacterial infection and then translocates from nucleus into cytoplasm to recruit STING for activation of TBK1-dependent IRF3 nuclear translocation and IFN-beta release. Inhibits the transcription of ribosomal RNA. May inhibit DNA binding by UBTF. Inhibits cell growth via p53/TP53 and RB1-dependent and independent pathways. Acts as a coactivator of RUNX2 during osteogenesis. May be involved in macrophage differentiation. Enables skeletal muscle and cardiac myocyte differentiation by sequestring Id proteins in the cytosol and promoting their ubiquitination and subsequent degradation. This Mus musculus (Mouse) protein is Interferon-activable protein 204 (Ifi204).